Reading from the N-terminus, the 194-residue chain is Ribonuclease HII (194 aa).

An RNase H type-2 domain is found at M1 to R194. Positions 6, 7, and 102 each coordinate a divalent metal cation.

This sequence belongs to the RNase HII family. It depends on Mn(2+) as a cofactor. Mg(2+) is required as a cofactor.

The protein resides in the cytoplasm. It catalyses the reaction Endonucleolytic cleavage to 5'-phosphomonoester.. Functionally, endonuclease that specifically degrades the RNA of RNA-DNA hybrids. This is Ribonuclease HII from Synechococcus sp. (strain WH7803).